The chain runs to 57 residues: uncharacterized protein (57 aa).

Positions 26 to 57 (VVSTRKRLKQNTNTPPHYDTSEDEDEDNYYNY) are disordered. Acidic residues predominate over residues 46–57 (SEDEDEDNYYNY).

This is an uncharacterized protein from Autographa californica nuclear polyhedrosis virus (AcMNPV).